A 146-amino-acid polypeptide reads, in one-letter code: UPF0178 protein BCQ_2874 (146 aa).

Belongs to the UPF0178 family.

The polypeptide is UPF0178 protein BCQ_2874 (Bacillus cereus (strain Q1)).